Here is a 270-residue protein sequence, read N- to C-terminus: MSDLHNESIFITGGGSGLGLALVERFIEEGAQVATLELSAAKVASLRQRFGEHILAVEGNVTCYADYQRAVDQILTRSGKLDCFIGNAGIWDHNASLVNTPAETLETGFHELFNVNVLGYLLGAKACAPALIASEGSMIFTLSNAAWYPGGGGPLYTASKHAATGLIRQLAYELAPKVRVNGVGPCGMASDLRGPQALGQSETSIMQSLTPEKIAAILPLQFFPQPADFTGPYVMLASRRNNRALSGVMINADAGLAIRGIRHVAAGLDL.

NAD(+) is bound at residue 10–34; sequence FITGGGSGLGLALVERFIEEGAQVA. Residue serine 143 coordinates substrate. Residue tyrosine 156 is the Proton acceptor of the active site.

This sequence belongs to the short-chain dehydrogenases/reductases (SDR) family.

The enzyme catalyses 3-(cis-5,6-dihydroxycyclohexa-1,3-dien-1-yl)propanoate + NAD(+) = 3-(2,3-dihydroxyphenyl)propanoate + NADH + H(+). The catalysed reaction is (2E)-3-(cis-5,6-dihydroxycyclohexa-1,3-dien-1-yl)prop-2-enoate + NAD(+) = (2E)-3-(2,3-dihydroxyphenyl)prop-2-enoate + NADH + H(+). It functions in the pathway aromatic compound metabolism; 3-phenylpropanoate degradation. In terms of biological role, converts 3-phenylpropionate-dihydrodiol (PP-dihydrodiol) and cinnamic acid-dihydrodiol (CI-dihydrodiol) into 3-(2,3-dihydroxylphenyl)propanoic acid (DHPP) and 2,3-dihydroxicinnamic acid (DHCI), respectively. The sequence is that of 3-phenylpropionate-dihydrodiol/cinnamic acid-dihydrodiol dehydrogenase from Escherichia coli (strain ATCC 8739 / DSM 1576 / NBRC 3972 / NCIMB 8545 / WDCM 00012 / Crooks).